A 509-amino-acid polypeptide reads, in one-letter code: Bifunctional purine biosynthesis protein PurH (509 aa).

Positions 1 to 144 constitute an MGS-like domain; sequence MKRALISVSD…KNYAAVTVVV (144 aa).

The protein belongs to the PurH family.

It carries out the reaction (6R)-10-formyltetrahydrofolate + 5-amino-1-(5-phospho-beta-D-ribosyl)imidazole-4-carboxamide = 5-formamido-1-(5-phospho-D-ribosyl)imidazole-4-carboxamide + (6S)-5,6,7,8-tetrahydrofolate. It catalyses the reaction IMP + H2O = 5-formamido-1-(5-phospho-D-ribosyl)imidazole-4-carboxamide. It functions in the pathway purine metabolism; IMP biosynthesis via de novo pathway; 5-formamido-1-(5-phospho-D-ribosyl)imidazole-4-carboxamide from 5-amino-1-(5-phospho-D-ribosyl)imidazole-4-carboxamide (10-formyl THF route): step 1/1. It participates in purine metabolism; IMP biosynthesis via de novo pathway; IMP from 5-formamido-1-(5-phospho-D-ribosyl)imidazole-4-carboxamide: step 1/1. In Listeria monocytogenes serotype 4a (strain HCC23), this protein is Bifunctional purine biosynthesis protein PurH.